We begin with the raw amino-acid sequence, 338 residues long: Nicotinate-nucleotide--dimethylbenzimidazole phosphoribosyltransferase (338 aa).

Glu-305 serves as the catalytic Proton acceptor.

This sequence belongs to the CobT family. As to quaternary structure, homodimer.

The catalysed reaction is 5,6-dimethylbenzimidazole + nicotinate beta-D-ribonucleotide = alpha-ribazole 5'-phosphate + nicotinate + H(+). It functions in the pathway nucleoside biosynthesis; alpha-ribazole biosynthesis; alpha-ribazole from 5,6-dimethylbenzimidazole: step 1/2. Its function is as follows. Catalyzes the synthesis of alpha-ribazole-5'-phosphate from nicotinate mononucleotide (NAMN) and 5,6-dimethylbenzimidazole (DMB). The polypeptide is Nicotinate-nucleotide--dimethylbenzimidazole phosphoribosyltransferase (cobU) (Sinorhizobium sp).